The following is a 234-amino-acid chain: uncharacterized protein (234 aa).

The ABC transporter domain occupies 5-234 (MELVDVWKIY…ERRGVVYGDT (230 aa)). 41–48 (GPSGSGKS) contacts ATP.

Belongs to the ABC transporter superfamily.

This is an uncharacterized protein from Thermotoga maritima (strain ATCC 43589 / DSM 3109 / JCM 10099 / NBRC 100826 / MSB8).